We begin with the raw amino-acid sequence, 233 residues long: Demethylmenaquinone methyltransferase (233 aa).

Residues T60, D81, and 106 to 107 contribute to the S-adenosyl-L-methionine site; that span reads DA.

The protein belongs to the class I-like SAM-binding methyltransferase superfamily. MenG/UbiE family.

The catalysed reaction is a 2-demethylmenaquinol + S-adenosyl-L-methionine = a menaquinol + S-adenosyl-L-homocysteine + H(+). The protein operates within quinol/quinone metabolism; menaquinone biosynthesis; menaquinol from 1,4-dihydroxy-2-naphthoate: step 2/2. Its function is as follows. Methyltransferase required for the conversion of demethylmenaquinol (DMKH2) to menaquinol (MKH2). This Staphylococcus saprophyticus subsp. saprophyticus (strain ATCC 15305 / DSM 20229 / NCIMB 8711 / NCTC 7292 / S-41) protein is Demethylmenaquinone methyltransferase.